The primary structure comprises 82 residues: uncharacterized protein (82 aa).

Belongs to the chlamydial CPn_0710/CT_666/TC_0037 family.

This is an uncharacterized protein from Chlamydia muridarum (strain MoPn / Nigg).